Here is a 123-residue protein sequence, read N- to C-terminus: Small ribosomal subunit protein uS12cz/uS12cy (123 aa).

Belongs to the universal ribosomal protein uS12 family. Part of the 30S ribosomal subunit.

The protein resides in the plastid. It localises to the chloroplast. With S4 and S5 plays an important role in translational accuracy. Located at the interface of the 30S and 50S subunits. The chain is Small ribosomal subunit protein uS12cz/uS12cy (rps12-A) from Coffea arabica (Arabian coffee).